Reading from the N-terminus, the 471-residue chain is Glutamate--tRNA ligase (471 aa).

The short motif at Pro9 to Gly19 is the 'HIGH' region element. Residues Cys98, Cys100, Cys125, and His127 each coordinate Zn(2+). A 'KMSKS' region motif is present at residues Lys237 to Arg241. Position 240 (Lys240) interacts with ATP.

The protein belongs to the class-I aminoacyl-tRNA synthetase family. Glutamate--tRNA ligase type 1 subfamily. In terms of assembly, monomer. Requires Zn(2+) as cofactor.

The protein localises to the cytoplasm. The catalysed reaction is tRNA(Glu) + L-glutamate + ATP = L-glutamyl-tRNA(Glu) + AMP + diphosphate. Functionally, catalyzes the attachment of glutamate to tRNA(Glu) in a two-step reaction: glutamate is first activated by ATP to form Glu-AMP and then transferred to the acceptor end of tRNA(Glu). This Escherichia coli (strain SMS-3-5 / SECEC) protein is Glutamate--tRNA ligase.